The primary structure comprises 682 residues: Cyclic nucleotide-gated cation channel (682 aa).

The tract at residues 1 to 41 (MTGQAALERSVSSHRLSVRSRLEGEAERAESAISRTDGDDD) is disordered. Over 1 to 136 (MTGQAALERS…EGFVVSQSDD (136 aa)) the chain is Cytoplasmic. Residues 20-30 (SRLEGEAERAE) show a composition bias toward basic and acidic residues. A helical transmembrane segment spans residues 137-157 (IYYYWLFFIALASLYNWIMLV). At 158–169 (ARACFDQLQDEN) the chain is on the extracellular side. A helical transmembrane segment spans residues 170 to 190 (FFLWVGLDYLCDVIYILDTCI). At 191 to 218 (RLRTGYLEQGLLVKDLAKLRDNYIRTLQ) the chain is on the cytoplasmic side. The helical transmembrane segment at 219 to 239 (FKLDFLSILPTELLFFVTGYV) threads the bilayer. The Extracellular segment spans residues 240-272 (PQLRFNRLLRFSRMFEFFDRTETRTNYPNAFRI). The chain crosses the membrane as a helical span at residues 273 to 293 (CNLILYILVIIHWNACIYYAI). Residues 294–311 (SKALGLSSDTWVYSGQNK) lie on the Cytoplasmic side of the membrane. Residues 312-332 (TLSFCYVYCFYWSTLTLTTIG) form a helical membrane-spanning segment. Topologically, residues 333–343 (EMPPPVKDEEY) are extracellular. The helical transmembrane segment at 344–364 (VFVVFDFLVGVLIFATIVGNV) threads the bilayer. Residues 365–682 (GSMIANMNAT…SAETNSEEET (318 aa)) are Cytoplasmic-facing. 3',5'-cyclic AMP-binding positions include 455 to 577 (LLVE…QGLL), E514, and R529. Residues 649–682 (GEHAGVPTHTHADIHAQPETHTRTSAETNSEEET) form a disordered region. The segment covering 658-672 (THADIHAQPETHTRT) has biased composition (basic and acidic residues).

It belongs to the cyclic nucleotide-gated cation channel (TC 1.A.1.5) family. In terms of tissue distribution, olfactory neurons.

It is found in the membrane. This cyclic nucleotide-gated channel is activated equally well by both cAMP and cGMP. The sequence is that of Cyclic nucleotide-gated cation channel from Ictalurus punctatus (Channel catfish).